The primary structure comprises 254 residues: Phosphomannomutase (254 aa).

Residue aspartate 16 is the Nucleophile of the active site. 2 residues coordinate Mg(2+): aspartate 16 and aspartate 18. Aspartate 18 acts as the Proton donor/acceptor in catalysis. 6 residues coordinate alpha-D-mannose 1-phosphate: arginine 25, arginine 129, arginine 140, arginine 147, serine 185, and aspartate 187. Aspartate 216, tyrosine 228, aspartate 230, and threonine 233 together coordinate Mg(2+).

It belongs to the eukaryotic PMM family. Homodimer.

It localises to the cytoplasm. The enzyme catalyses alpha-D-mannose 1-phosphate = D-mannose 6-phosphate. The protein operates within nucleotide-sugar biosynthesis; GDP-alpha-D-mannose biosynthesis; alpha-D-mannose 1-phosphate from D-fructose 6-phosphate: step 2/2. Its function is as follows. Involved in the synthesis of the GDP-mannose and dolichol-phosphate-mannose required for a number of critical mannosyl transfer reactions. Required for maintaining N-linked glycoprotein glycosylation at the neuromuscular junction (NMJ) synaptomatrix, and thus acts in multiple pathways that prevent NMJ structural overgrowth, restrict synaptic bouton differentiation, and limit NMJ neurotransmission strength, in order to maintain viability, coordinate movement, and in adults ensure correct wing positioning. Acts in the NMJ trans-synaptic Wg pathway via glycosylation of synaptic Mmp2 which enables dlp/wg signaling during development. The polypeptide is Phosphomannomutase (Drosophila melanogaster (Fruit fly)).